Consider the following 227-residue polypeptide: MVPPLALDIDGTLTTASGRLDARVFELLPDWDAPVVLATGKAFPYPVALAHFLGRAETVIAENGGVVHVDGETAILGDAEAPRAVVEAFRERGGDPGWGARDTVNRWRETEVALSLDADEALLREVAAAAGGDVEVVDTGYAYHVKSTGVSKGRGLERVGDALGIGPDEFVAIGDSENDVSTFAVAGESYAVANADGAAREAADIVVADSYMDGTAGVLADLRTRTE.

D8 acts as the Nucleophile in catalysis. Residues D8 and D10 each coordinate Mg(2+). K152 serves as a coordination point for substrate. Mg(2+)-binding residues include D175 and D179.

It belongs to the archaeal SPP-like hydrolase family. The cofactor is Mg(2+).

The enzyme catalyses 2-phosphoglycolate + H2O = glycolate + phosphate. Functionally, catalyzes the dephosphorylation of 2-phosphoglycolate. The protein is Phosphoglycolate phosphatase of Halorubrum lacusprofundi (strain ATCC 49239 / DSM 5036 / JCM 8891 / ACAM 34).